The following is a 256-amino-acid chain: tRNA (guanine-N(1)-)-methyltransferase (256 aa).

Residues G117 and 137-142 (LGDFVL) each bind S-adenosyl-L-methionine.

Belongs to the RNA methyltransferase TrmD family. Homodimer.

It is found in the cytoplasm. The catalysed reaction is guanosine(37) in tRNA + S-adenosyl-L-methionine = N(1)-methylguanosine(37) in tRNA + S-adenosyl-L-homocysteine + H(+). In terms of biological role, specifically methylates guanosine-37 in various tRNAs. This Methylibium petroleiphilum (strain ATCC BAA-1232 / LMG 22953 / PM1) protein is tRNA (guanine-N(1)-)-methyltransferase.